The primary structure comprises 295 residues: GTPase Era (295 aa).

The 170-residue stretch at 7-176 (KTISVCIIGR…IKSKAKVSPW (170 aa)) folds into the Era-type G domain. Residues 15–22 (GRPNSGKS) form a G1 region. 15-22 (GRPNSGKS) is a binding site for GTP. A G2 region spans residues 41–45 (QTTRS). The tract at residues 62–65 (DTPG) is G3. GTP contacts are provided by residues 62–66 (DTPGI) and 124–127 (NKID). The segment at 124–127 (NKID) is G4. Residues 152 to 154 (ISA) form a G5 region. One can recognise a KH type-2 domain in the interval 204–281 (LQQELPYKLT…HLFLFVKVHA (78 aa)).

This sequence belongs to the TRAFAC class TrmE-Era-EngA-EngB-Septin-like GTPase superfamily. Era GTPase family. As to quaternary structure, monomer.

The protein resides in the cytoplasm. It localises to the cell inner membrane. Functionally, an essential GTPase that binds both GDP and GTP, with rapid nucleotide exchange. Plays a role in 16S rRNA processing and 30S ribosomal subunit biogenesis and possibly also in cell cycle regulation and energy metabolism. The sequence is that of GTPase Era from Rickettsia prowazekii (strain Madrid E).